A 265-amino-acid chain; its full sequence is uncharacterized protein (265 aa).

Positions M1 to V160 are disordered. Low complexity predominate over residues A28–K42. 2 stretches are compositionally biased toward basic and acidic residues: residues S73–S85 and R102–K119.

This sequence belongs to the SERBP1-HABP4 family.

In terms of biological role, ribosome-binding protein that acts as a regulator of mRNA translation by promoting ribosome inactivation. This is an uncharacterized protein from Dictyostelium discoideum (Social amoeba).